Here is a 335-residue protein sequence, read N- to C-terminus: tRNA N6-adenosine threonylcarbamoyltransferase (335 aa).

Residues H109, H113, and Y130 each contribute to the a divalent metal cation site. Substrate-binding positions include 130 to 134 (YVSGG), D162, G177, E181, and N266. D294 lines the a divalent metal cation pocket.

It belongs to the KAE1 / TsaD family. As to quaternary structure, component of the EKC/KEOPS complex composed of at least tp53rk, tprkb, osgep and lage3; the whole complex dimerizes. A divalent metal cation serves as cofactor.

The protein localises to the cytoplasm. It is found in the nucleus. The enzyme catalyses L-threonylcarbamoyladenylate + adenosine(37) in tRNA = N(6)-L-threonylcarbamoyladenosine(37) in tRNA + AMP + H(+). In terms of biological role, component of the EKC/KEOPS complex that is required for the formation of a threonylcarbamoyl group on adenosine at position 37 (t(6)A37) in tRNAs that read codons beginning with adenine. The complex is probably involved in the transfer of the threonylcarbamoyl moiety of threonylcarbamoyl-AMP (TC-AMP) to the N6 group of A37. Osgep likely plays a direct catalytic role in this reaction, but requires other protein(s) of the complex to fulfill this activity. This is tRNA N6-adenosine threonylcarbamoyltransferase from Xenopus laevis (African clawed frog).